Here is a 473-residue protein sequence, read N- to C-terminus: PEP-dependent dihydroxyacetone kinase, phosphoryl donor subunit DhaM (473 aa).

Residues 1-137 form the PTS EIIA type-4 domain; it reads MVNLVIVSHS…LAAKQAQLGI (137 aa). H9 acts as the Tele-phosphohistidine intermediate in catalysis. The 88-residue stretch at 155–242 folds into the HPr domain; sequence ARSVTVTIRN…SLAAEDFGEH (88 aa). The active-site Pros-phosphohistidine intermediate is H169. A PTS EI-like, N-terminal part region spans residues 266-472; it reads PLPLAQPARH…IDPAAQRVSC (207 aa). H432 (tele-phosphohistidine intermediate) is an active-site residue.

Belongs to the PEP-utilizing enzyme family. As to quaternary structure, homodimer. The dihydroxyacetone kinase complex is composed of a homodimer of DhaM, a homodimer of DhaK and the subunit DhaL.

The enzyme catalyses dihydroxyacetone + phosphoenolpyruvate = dihydroxyacetone phosphate + pyruvate. Functionally, component of the dihydroxyacetone kinase complex, which is responsible for the phosphoenolpyruvate (PEP)-dependent phosphorylation of dihydroxyacetone. DhaM serves as the phosphoryl donor. Is phosphorylated by phosphoenolpyruvate in an EI- and HPr-dependent reaction, and a phosphorelay system on histidine residues finally leads to phosphoryl transfer to DhaL and dihydroxyacetone. This chain is PEP-dependent dihydroxyacetone kinase, phosphoryl donor subunit DhaM, found in Pantoea ananatis (strain LMG 20103).